Here is a 231-residue protein sequence, read N- to C-terminus: Large ribosomal subunit protein uL1 (231 aa).

The protein belongs to the universal ribosomal protein uL1 family. Part of the 50S ribosomal subunit.

Its function is as follows. Binds directly to 23S rRNA. The L1 stalk is quite mobile in the ribosome, and is involved in E site tRNA release. In terms of biological role, protein L1 is also a translational repressor protein, it controls the translation of the L11 operon by binding to its mRNA. This chain is Large ribosomal subunit protein uL1, found in Clostridium kluyveri (strain NBRC 12016).